The primary structure comprises 671 residues: Leucine aminopeptidase 2 (671 aa).

Residues 184–186 (QLE) and 311–316 (PYGGME) each bind substrate. Position 340 (histidine 340) interacts with Zn(2+). Residue glutamate 341 is the Proton acceptor of the active site. Residues histidine 344 and glutamate 363 each contribute to the Zn(2+) site. The active-site Proton donor is tyrosine 429.

The protein belongs to the peptidase M1 family. Zn(2+) is required as a cofactor.

It is found in the cytoplasm. It localises to the nucleus. The enzyme catalyses an epoxide + H2O = an ethanediol. Its activity is regulated as follows. Inhibited by 3-(4-benzyloxyphenyl)-2-(R)-amino-1-propanethiol (thioamine) and N-hydroxy-N-(2-(S)-amino-3-(4-benzyloxyphenyl)propyl)-5-carboxypen-tanamide (hydroxamic acid). The aminopeptidase activity is stimulated by LTA(4). Aminopeptidase that preferentially cleaves di- and tripeptides. Also has low epoxide hydrolase activity (in vitro). Can hydrolyze the epoxide leukotriene LTA(4) but it forms preferentially 5,6-dihydroxy-7,9,11,14-eicosatetraenoic acid rather than the cytokine leukotriene B(4) as the product compared to the homologous mammalian enzyme (in vitro). In Saccharomyces cerevisiae (strain YJM789) (Baker's yeast), this protein is Leucine aminopeptidase 2.